We begin with the raw amino-acid sequence, 878 residues long: AP-2 complex subunit alpha (878 aa).

It belongs to the adaptor complexes large subunit family. In terms of assembly, adaptor protein complex 2 (AP-2) is a heterotetramer composed of two large adaptins (alpha-type subunit apl3 and beta-type subunit apl1), a medium chain (mu-type subunit apm4) and a small adaptin (sigma-type subunit aps2).

The protein resides in the cell membrane. Its subcellular location is the membrane. It localises to the coated pit. Its function is as follows. Adaptins are components of the adaptor complexes which link clathrin to receptors in coated vesicles. Clathrin-associated protein complexes are believed to interact with the cytoplasmic tails of membrane proteins, leading to their selection and concentration. Alpha adaptin is a subunit of the plasma membrane adaptor. The sequence is that of AP-2 complex subunit alpha (apl3) from Schizosaccharomyces pombe (strain 972 / ATCC 24843) (Fission yeast).